A 487-amino-acid chain; its full sequence is Melanopsin (487 aa).

The tract at residues 1–37 (MNPPSGPRTQEPSCVATPASPSRWDGYRSSTSSLDQP) is disordered. The Extracellular portion of the chain corresponds to 1-67 (MNPPSGPRTQ…VDVPDHAHYT (67 aa)). A helical transmembrane segment spans residues 68–88 (LGTVILLVGLTGILGNLMVIY). At 89–102 (TFCRSRGLRTPANM) the chain is on the cytoplasmic side. A helical membrane pass occupies residues 103–123 (FIINLAVSDFFMSFTQAPVFF). Topologically, residues 124-139 (ASSLHKRWLFGEAGCE) are extracellular. C138 and C216 are joined by a disulfide. Residues 140 to 160 (FYAFCGALFGITSMITLMAIA) traverse the membrane as a helical segment. The Cytoplasmic segment spans residues 161-183 (LDRYLVITHPLATIGVVSKRRAA). A helical transmembrane segment spans residues 184–204 (LVLLGVWLYALAWSLPPFFGW). The Extracellular segment spans residues 205-233 (SAYVPEGLLTSCSWDYMSFTPSVRAYTML). A helical transmembrane segment spans residues 234-254 (LFCFVFFLPLLVIVYCYIFIF). Over 255–291 (RAIRETGQALQTFRACEGGGRSPRQRQRLQREWKMAK) the chain is Cytoplasmic. Residues 292–312 (IELLVILLFVLSWAPYSIVAL) traverse the membrane as a helical segment. Over 313–327 (MAFAGYAHVLTPYMN) the chain is Extracellular. Residues 328–348 (SVPAVIAKASAIHNPIIYAIT) form a helical membrane-spanning segment. An N6-(retinylidene)lysine modification is found at K335. Residues 349-487 (HPKYRMAIAQ…LPLHPGWAFH (139 aa)) are Cytoplasmic-facing. Residues 436–459 (CSQGLEDREAKAPVRPQGREAETP) are disordered. Over residues 440-457 (LEDREAKAPVRPQGREAE) the composition is skewed to basic and acidic residues.

This sequence belongs to the G-protein coupled receptor 1 family. Opsin subfamily. As to expression, eye. Expression is restricted within the ganglion cell layer.

It localises to the cell membrane. Its subcellular location is the cell projection. The protein localises to the axon. The protein resides in the dendrite. It is found in the perikaryon. Functionally, photoreceptor that binds cis-retinaldehydes. Contributes to pupillar reflex, photoentrainment and other non-image forming responses to light. May be involved in the optokinetic visual tracking response. May be involved in the regulation of retinal hyaloid vessel growth and regression. This chain is Melanopsin (OPN4), found in Felis catus (Cat).